A 102-amino-acid polypeptide reads, in one-letter code: Cytochrome c-553 (102 aa).

The N-terminal stretch at 1–23 (MKRILVVMSICAALAFGVSAAMA) is a signal peptide. Heme c-binding residues include C33, C36, H37, and M80.

Post-translationally, binds 1 heme c group covalently per subunit.

It is found in the periplasm. Its function is as follows. Natural electron acceptor for a formate dehydrogenase. The chain is Cytochrome c-553 from Nitratidesulfovibrio vulgaris (strain DSM 19637 / Miyazaki F) (Desulfovibrio vulgaris).